A 389-amino-acid chain; its full sequence is Succinate--CoA ligase [ADP-forming] subunit beta (389 aa).

An ATP-grasp domain is found at 9–236 (RDMFEAHGVP…KDAADPLEAK (228 aa)). ATP is bound by residues Lys-45, 52-54 (GRG), Ala-94, and Glu-99. Mg(2+)-binding residues include Asn-191 and Asp-205. Substrate contacts are provided by residues Asn-256 and 318–320 (GIT).

It belongs to the succinate/malate CoA ligase beta subunit family. As to quaternary structure, heterotetramer of two alpha and two beta subunits. Mg(2+) serves as cofactor.

It catalyses the reaction succinate + ATP + CoA = succinyl-CoA + ADP + phosphate. It carries out the reaction GTP + succinate + CoA = succinyl-CoA + GDP + phosphate. Its pathway is carbohydrate metabolism; tricarboxylic acid cycle; succinate from succinyl-CoA (ligase route): step 1/1. Functionally, succinyl-CoA synthetase functions in the citric acid cycle (TCA), coupling the hydrolysis of succinyl-CoA to the synthesis of either ATP or GTP and thus represents the only step of substrate-level phosphorylation in the TCA. The beta subunit provides nucleotide specificity of the enzyme and binds the substrate succinate, while the binding sites for coenzyme A and phosphate are found in the alpha subunit. In Arthrobacter sp. (strain FB24), this protein is Succinate--CoA ligase [ADP-forming] subunit beta.